A 252-amino-acid polypeptide reads, in one-letter code: Hydroxyacylglutathione hydrolase (252 aa).

The Zn(2+) site is built by histidine 54, histidine 56, aspartate 58, histidine 59, histidine 111, aspartate 130, and histidine 170.

This sequence belongs to the metallo-beta-lactamase superfamily. Glyoxalase II family. Monomer. It depends on Zn(2+) as a cofactor.

The catalysed reaction is an S-(2-hydroxyacyl)glutathione + H2O = a 2-hydroxy carboxylate + glutathione + H(+). It functions in the pathway secondary metabolite metabolism; methylglyoxal degradation; (R)-lactate from methylglyoxal: step 2/2. Its function is as follows. Thiolesterase that catalyzes the hydrolysis of S-D-lactoyl-glutathione to form glutathione and D-lactic acid. The chain is Hydroxyacylglutathione hydrolase from Francisella tularensis subsp. novicida (strain U112).